The primary structure comprises 580 residues: Rho guanine nucleotide exchange factor 25 (580 aa).

A compositionally biased stretch (low complexity) spans 48–67; the sequence is AASGLAAPSGPSSGLSSGPC. Disordered regions lie at residues 48 to 76 and 128 to 157; these read AASGLAAPSGPSSGLSSGPCSPGPPGPVS and LEGPGDKTQPPEEETLSQAPESEEEQKKKA. Positions 160-336 constitute a DH domain; that stretch reads RSMYVLSELV…CFVPKRCNDM (177 aa). Positions 278–299 are important for binding to Rho GTPases; the sequence is LGHRLQLNDLLIKPVQRIMKYQ. The region spanning 348–466 is the PH domain; the sequence is KLTAQGKLLG…WIKHVAQILE (119 aa). The sufficient to bind activated GNAQ stretch occupies residues 467-493; that stretch reads SQRDFLNALQSPIEYQRRESQTNSLGR. Disordered regions lie at residues 482-524 and 545-580; these read QRRE…GSLP and ALGDIPQAPHDSPPVSPTPKTPPCQARLAKLDEDEL. The span at 509–520 shows a compositional bias: polar residues; sequence DQAQGSTHTPIN. The segment covering 555-566 has biased composition (pro residues); that stretch reads DSPPVSPTPKTP.

In terms of assembly, interacts (via the DH domain) with POPDC1 (via the C-terminus cytoplasmic tail). Interacts with activated GNAQ and GNA11. Interacts with RHOA, CDC42 and RAC1. Isoform 1 and isoform 2 are highly expressed in excitable tissues, such as brain, heart and muscle. Also detected in kidney and liver.

The protein localises to the cell membrane. The protein resides in the cytoplasm. It localises to the myofibril. It is found in the sarcomere. In terms of biological role, may play a role in actin cytoskeleton reorganization in different tissues since its activation induces formation of actin stress fibers. It works as a guanine nucleotide exchange factor for Rho family of small GTPases. Links specifically G alpha q/11-coupled receptors to RHOA activation. May be an important regulator of processes involved in axon and dendrite formation. In neurons seems to be an exchange factor primarily for RAC1. Involved in skeletal myogenesis. The sequence is that of Rho guanine nucleotide exchange factor 25 (ARHGEF25) from Homo sapiens (Human).